Here is a 465-residue protein sequence, read N- to C-terminus: VGFKAGVKDYKLTYYTPNYETKDTDILAAFRVTPQPGVPPEEAGAAVAAESSTGTWTTVWTDGLTSLDRYKGRCYHIEPVPGDENQYIAYVAYPLDLFEEGSVTNMFTSIVGNVFGFKALRALRLEDLRIPAAYAKTFQGPPHGIQVERDKLNKYGRPLLGCTIKPKLGLSAKNYGRAVYECLRGGLDFTKDDENVNSQPFMRWRDRFLFCAEAIYKAQAETGEIKGHYLNATAGTCEEMMKRAVFARELGVPIVMHDYLTGGFTANTSLAEYCRDNGLLLHIHRAMHAVIDRQKNHGIHFRVLAKALRMSGGDHIHAGTVVGKLEGEREITLGFVDLLRDDYIEKDRGRGIYFSQDWVSLPGVLPVASGGIHVWHMPALTEIFGDDSVLQFGGGTLGHPWGNAPGAVANRVALEACVQARNEGRDLAREGNEIIREAGQWSNELSAACAIWKEIKFEFPAMDTL.

Lysine 4 is modified (N6,N6,N6-trimethyllysine). Residues asparagine 113 and threonine 163 each contribute to the substrate site. Lysine 165 functions as the Proton acceptor in the catalytic mechanism. Lysine 167 lines the substrate pocket. Residues lysine 191, aspartate 193, and glutamate 194 each coordinate Mg(2+). The residue at position 191 (lysine 191) is an N6-carboxylysine. Residue histidine 284 is the Proton acceptor of the active site. Residues arginine 285, histidine 317, and serine 369 each coordinate substrate.

Belongs to the RuBisCO large chain family. Type I subfamily. As to quaternary structure, heterohexadecamer of 8 large chains and 8 small chains; disulfide-linked. The disulfide link is formed within the large subunit homodimers. Requires Mg(2+) as cofactor. The disulfide bond which can form in the large chain dimeric partners within the hexadecamer appears to be associated with oxidative stress and protein turnover.

The protein localises to the plastid. It localises to the chloroplast. It catalyses the reaction 2 (2R)-3-phosphoglycerate + 2 H(+) = D-ribulose 1,5-bisphosphate + CO2 + H2O. The catalysed reaction is D-ribulose 1,5-bisphosphate + O2 = 2-phosphoglycolate + (2R)-3-phosphoglycerate + 2 H(+). RuBisCO catalyzes two reactions: the carboxylation of D-ribulose 1,5-bisphosphate, the primary event in carbon dioxide fixation, as well as the oxidative fragmentation of the pentose substrate in the photorespiration process. Both reactions occur simultaneously and in competition at the same active site. The sequence is that of Ribulose bisphosphate carboxylase large chain from Epacris sp.